The following is a 275-amino-acid chain: uncharacterized protein (275 aa).

3 helical membrane passes run 15 to 35 (LFLP…FLGS), 39 to 59 (AIMI…FGLF), and 70 to 90 (ILYL…VVYL). The disordered stretch occupies residues 140–191 (SSKTDMDSQVAEAPQTEEGEPSVNQVPQEAGASHRVGPYQDQGLATDRNGNP).

It localises to the mitochondrion membrane. This is an uncharacterized protein from Arabidopsis thaliana (Mouse-ear cress).